The chain runs to 37 residues: Large ribosomal subunit protein bL36B (37 aa).

This sequence belongs to the bacterial ribosomal protein bL36 family.

This Saccharopolyspora erythraea (strain ATCC 11635 / DSM 40517 / JCM 4748 / NBRC 13426 / NCIMB 8594 / NRRL 2338) protein is Large ribosomal subunit protein bL36B.